The primary structure comprises 245 residues: Spore membrane assembly protein 1 (245 aa).

Its function is as follows. Involved in spore and ascus formation. Required for the efficient assembly of the precursors of the prospore membrane to a continuous prospore membrane. The chain is Spore membrane assembly protein 1 (SMA1) from Saccharomyces cerevisiae (strain ATCC 204508 / S288c) (Baker's yeast).